The sequence spans 353 residues: S-adenosylmethionine:tRNA ribosyltransferase-isomerase (353 aa).

This sequence belongs to the QueA family. Monomer.

Its subcellular location is the cytoplasm. The catalysed reaction is 7-aminomethyl-7-carbaguanosine(34) in tRNA + S-adenosyl-L-methionine = epoxyqueuosine(34) in tRNA + adenine + L-methionine + 2 H(+). It functions in the pathway tRNA modification; tRNA-queuosine biosynthesis. Functionally, transfers and isomerizes the ribose moiety from AdoMet to the 7-aminomethyl group of 7-deazaguanine (preQ1-tRNA) to give epoxyqueuosine (oQ-tRNA). This chain is S-adenosylmethionine:tRNA ribosyltransferase-isomerase, found in Rickettsia bellii (strain OSU 85-389).